A 306-amino-acid polypeptide reads, in one-letter code: Small ribosomal subunit protein uS2 (306 aa).

At serine 2 the chain carries N-acetylserine. Laminin-binding stretches follow at residues 161–180 (IPCNNKGAHSVGLMWWMLAR) and 205–229 (RDPEEIEKEEQAAAEKATTKEEFQG). [DE]-W-[ST] repeat units follow at residues 230-232 (EWT), 245-247 (DWS), 276-278 (DWS), 286-288 (DWS), and 304-306 (EWS). The interval 242-306 (EVADWSEGVQ…EWTGTTTEWS (65 aa)) is laminin-binding. The segment at 247–306 (SEGVQVPSVPIQQFTAERTDVPPAPKPTEDWSTQPASTDDWSAAPTAQASEWTGTTTEWS) is disordered. The segment covering 276–306 (DWSTQPASTDDWSAAPTAQASEWTGTTTEWS) has biased composition (polar residues).

The protein belongs to the universal ribosomal protein uS2 family. Monomer (37LRP) and homodimer (67LR). Component of the small ribosomal subunit. Mature ribosomes consist of a small (40S) and a large (60S) subunit. The 40S subunit contains about 33 different proteins and 1 molecule of RNA (18S). The 60S subunit contains about 49 different proteins and 3 molecules of RNA (28S, 5.8S and 5S). Interacts with rps21. Interacts with several laminins including at least lamb1. Interacts with mdk. In terms of processing, acylated. Acylation may be a prerequisite for conversion of the monomeric 37 kDa laminin receptor precursor (37LRP) to the mature dimeric 67 kDa laminin receptor (67LR), and may provide a mechanism for membrane association. Cleaved by stromelysin-3 (ST3) at the cell surface. Cleavage by stromelysin-3 may be a mechanism to alter cell-extracellular matrix interactions.

It is found in the cell membrane. The protein localises to the cytoplasm. Its subcellular location is the nucleus. Functionally, required for the assembly and/or stability of the 40S ribosomal subunit. Required for the processing of the 20S rRNA-precursor to mature 18S rRNA in a late step of the maturation of 40S ribosomal subunits. Also functions as a cell surface receptor for laminin. Plays a role in cell adhesion to the basement membrane and in the consequent activation of signaling transduction pathways. May play a role in cell fate determination and tissue morphogenesis. The polypeptide is Small ribosomal subunit protein uS2 (rpsa) (Xenopus laevis (African clawed frog)).